Consider the following 694-residue polypeptide: Elongation factor G (694 aa).

The region spanning 12–286 (SKLRNIGIMA…AVVDYLPSPI (275 aa)) is the tr-type G domain. GTP is bound by residues 21 to 28 (AHIDAGKT), 85 to 89 (DTPGH), and 139 to 142 (NKMD).

Belongs to the TRAFAC class translation factor GTPase superfamily. Classic translation factor GTPase family. EF-G/EF-2 subfamily.

It localises to the cytoplasm. In terms of biological role, catalyzes the GTP-dependent ribosomal translocation step during translation elongation. During this step, the ribosome changes from the pre-translocational (PRE) to the post-translocational (POST) state as the newly formed A-site-bound peptidyl-tRNA and P-site-bound deacylated tRNA move to the P and E sites, respectively. Catalyzes the coordinated movement of the two tRNA molecules, the mRNA and conformational changes in the ribosome. The polypeptide is Elongation factor G (Pseudothermotoga lettingae (strain ATCC BAA-301 / DSM 14385 / NBRC 107922 / TMO) (Thermotoga lettingae)).